The following is a 316-amino-acid chain: ATP synthase gamma chain (316 aa).

It belongs to the ATPase gamma chain family. As to quaternary structure, F-type ATPases have 2 components, CF(1) - the catalytic core - and CF(0) - the membrane proton channel. CF(1) has five subunits: alpha(3), beta(3), gamma(1), delta(1), epsilon(1). CF(0) has three main subunits: a, b and c.

The protein localises to the cellular thylakoid membrane. In terms of biological role, produces ATP from ADP in the presence of a proton gradient across the membrane. The gamma chain is believed to be important in regulating ATPase activity and the flow of protons through the CF(0) complex. In Prochlorococcus marinus (strain NATL2A), this protein is ATP synthase gamma chain.